The following is a 431-amino-acid chain: Glutamate-1-semialdehyde 2,1-aminomutase (431 aa).

An N6-(pyridoxal phosphate)lysine modification is found at K269.

The protein belongs to the class-III pyridoxal-phosphate-dependent aminotransferase family. HemL subfamily. Homodimer. Pyridoxal 5'-phosphate serves as cofactor.

It is found in the cytoplasm. The catalysed reaction is (S)-4-amino-5-oxopentanoate = 5-aminolevulinate. The protein operates within porphyrin-containing compound metabolism; protoporphyrin-IX biosynthesis; 5-aminolevulinate from L-glutamyl-tRNA(Glu): step 2/2. Its pathway is porphyrin-containing compound metabolism; chlorophyll biosynthesis. The protein is Glutamate-1-semialdehyde 2,1-aminomutase of Pelodictyon phaeoclathratiforme (strain DSM 5477 / BU-1).